Here is a 148-residue protein sequence, read N- to C-terminus: Lysozyme-like protein 2 (148 aa).

Residues 1–19 (MKAAGILTLIGCLVTGAES) form the signal peptide. In terms of domain architecture, C-type lysozyme spans 20-148 (KIYTRCKLAK…SDWKKDCEVS (129 aa)). 4 disulfide bridges follow: C25–C145, C49–C133, C83–C98, and C94–C112. E54 is a catalytic residue. A glycan (N-linked (GlcNAc...) asparagine) is linked at N58. The active site involves D71.

It belongs to the glycosyl hydrolase 22 family. Monomer. Expressed in testis, epididymis and placenta.

Its subcellular location is the secreted. The enzyme catalyses Hydrolysis of (1-&gt;4)-beta-linkages between N-acetylmuramic acid and N-acetyl-D-glucosamine residues in a peptidoglycan and between N-acetyl-D-glucosamine residues in chitodextrins.. The protein is Lysozyme-like protein 2 (LYZL2) of Homo sapiens (Human).